The sequence spans 76 residues: Exodeoxyribonuclease 7 small subunit (76 aa).

The protein belongs to the XseB family. Heterooligomer composed of large and small subunits.

It is found in the cytoplasm. It carries out the reaction Exonucleolytic cleavage in either 5'- to 3'- or 3'- to 5'-direction to yield nucleoside 5'-phosphates.. Functionally, bidirectionally degrades single-stranded DNA into large acid-insoluble oligonucleotides, which are then degraded further into small acid-soluble oligonucleotides. The polypeptide is Exodeoxyribonuclease 7 small subunit (Bacillus cytotoxicus (strain DSM 22905 / CIP 110041 / 391-98 / NVH 391-98)).